Consider the following 193-residue polypeptide: dTTP/UTP pyrophosphatase (193 aa).

Asp71 functions as the Proton acceptor in the catalytic mechanism.

It belongs to the Maf family. YhdE subfamily. The cofactor is a divalent metal cation.

It is found in the cytoplasm. It carries out the reaction dTTP + H2O = dTMP + diphosphate + H(+). The catalysed reaction is UTP + H2O = UMP + diphosphate + H(+). Its function is as follows. Nucleoside triphosphate pyrophosphatase that hydrolyzes dTTP and UTP. May have a dual role in cell division arrest and in preventing the incorporation of modified nucleotides into cellular nucleic acids. The sequence is that of dTTP/UTP pyrophosphatase from Citrifermentans bemidjiense (strain ATCC BAA-1014 / DSM 16622 / JCM 12645 / Bem) (Geobacter bemidjiensis).